Here is a 490-residue protein sequence, read N- to C-terminus: Cobyric acid synthase (490 aa).

The GATase cobBQ-type domain maps to 251 to 444 (GLTIAVIHLP…LHGIFANDAF (194 aa)). The active-site Nucleophile is the Cys-329. His-436 is a catalytic residue.

The protein belongs to the CobB/CobQ family. CobQ subfamily.

It functions in the pathway cofactor biosynthesis; adenosylcobalamin biosynthesis. In terms of biological role, catalyzes amidations at positions B, D, E, and G on adenosylcobyrinic A,C-diamide. NH(2) groups are provided by glutamine, and one molecule of ATP is hydrogenolyzed for each amidation. This chain is Cobyric acid synthase, found in Roseiflexus castenholzii (strain DSM 13941 / HLO8).